A 422-amino-acid chain; its full sequence is Leucine-rich repeat protein 1 (422 aa).

6 LRR repeats span residues Leu-184–Leu-207, His-209–Ser-230, Gln-233–Glu-258, Thr-260–Leu-279, Thr-280–Met-301, and Leu-304–Val-327.

As to quaternary structure, component of the probable ECS(LRR1) E3 ubiquitin-protein ligase complex which contains CUL2, RBX1, Elongin BC complex and LRR1. Interacts with CUL2, RBX1, ELOB and ELOC.

It localises to the nucleus. It participates in protein modification; protein ubiquitination. In terms of biological role, substrate recognition subunit of an ECS (Elongin BC-CUL2/5-SOCS-box protein) E3 ubiquitin-protein ligase complex which mediates the ubiquitination and subsequent proteasomal degradation of target proteins. ECS(LRR1) ubiquitinates MCM7 and promotes CMG replisome disassembly by VCP and chromatin extraction during S-phase. May negatively regulate the 4-1BB-mediated signaling cascades which result in the activation of NK-kappaB and JNK1. This Mus musculus (Mouse) protein is Leucine-rich repeat protein 1.